The following is a 372-amino-acid chain: Alanine racemase (372 aa).

Catalysis depends on K36, which acts as the Proton acceptor; specific for D-alanine. K36 is subject to N6-(pyridoxal phosphate)lysine. A substrate-binding site is contributed by R134. The active-site Proton acceptor; specific for L-alanine is Y266. M314 contributes to the substrate binding site.

Belongs to the alanine racemase family. It depends on pyridoxal 5'-phosphate as a cofactor.

The catalysed reaction is L-alanine = D-alanine. Its pathway is amino-acid biosynthesis; D-alanine biosynthesis; D-alanine from L-alanine: step 1/1. Its function is as follows. Catalyzes the interconversion of L-alanine and D-alanine. May also act on other amino acids. The polypeptide is Alanine racemase (alr) (Nitratidesulfovibrio vulgaris (strain DSM 19637 / Miyazaki F) (Desulfovibrio vulgaris)).